Reading from the N-terminus, the 264-residue chain is NAD-capped RNA hydrolase NudC (264 aa).

Zn(2+)-binding residues include C99 and C102. E112 serves as a coordination point for substrate. Residues C117 and C120 each contribute to the Zn(2+) site. Residue Y125 coordinates substrate. Residues 126 to 253 (PVICPSIIVA…TIARKLIHAT (128 aa)) form the Nudix hydrolase domain. A divalent metal cation is bound by residues A162, E178, and E182. The Nudix box signature appears at 163–184 (GFVEVGETFEQAVQREVFEETG). 196 to 203 (QPWAFPNS) provides a ligand contact to substrate. Position 223 (E223) interacts with a divalent metal cation. A substrate-binding site is contributed by A246.

This sequence belongs to the Nudix hydrolase family. NudC subfamily. As to quaternary structure, homodimer. Mg(2+) is required as a cofactor. It depends on Mn(2+) as a cofactor. Zn(2+) serves as cofactor.

It carries out the reaction a 5'-end NAD(+)-phospho-ribonucleoside in mRNA + H2O = a 5'-end phospho-adenosine-phospho-ribonucleoside in mRNA + beta-nicotinamide D-ribonucleotide + 2 H(+). It catalyses the reaction NAD(+) + H2O = beta-nicotinamide D-ribonucleotide + AMP + 2 H(+). The enzyme catalyses NADH + H2O = reduced beta-nicotinamide D-ribonucleotide + AMP + 2 H(+). MRNA decapping enzyme that specifically removes the nicotinamide adenine dinucleotide (NAD) cap from a subset of mRNAs by hydrolyzing the diphosphate linkage to produce nicotinamide mononucleotide (NMN) and 5' monophosphate mRNA. The NAD-cap is present at the 5'-end of some mRNAs and stabilizes RNA against 5'-processing. Has preference for mRNAs with a 5'-end purine. Catalyzes the hydrolysis of a broad range of dinucleotide pyrophosphates. This is NAD-capped RNA hydrolase NudC from Haemophilus influenzae (strain PittGG).